A 349-amino-acid chain; its full sequence is Pinopsin (349 aa).

The segment covering 1 to 16 has biased composition (polar residues); sequence MDPTNSPQEPPHTSTP. A disordered region spans residues 1 to 22; that stretch reads MDPTNSPQEPPHTSTPGPFDGP. Residues 1–32 are Extracellular-facing; the sequence is MDPTNSPQEPPHTSTPGPFDGPQWPHQAPRGM. Residues 33 to 57 form a helical membrane-spanning segment; sequence YLSVAVLMGIVVISASVVNGLVIVV. Residues 58-69 are Cytoplasmic-facing; it reads SIRYKKLRSPLN. Residues 70 to 94 traverse the membrane as a helical segment; that stretch reads YILVNLAMADLLVTLCGSSVSFSNN. Topologically, residues 95 to 109 are extracellular; sequence INGFFVFGKRLCELE. Cys106 and Cys183 are joined by a disulfide. The helical transmembrane segment at 110 to 129 threads the bilayer; that stretch reads GFMVSLTGIVGLWSLAILAL. The Cytoplasmic portion of the chain corresponds to 130 to 148; that stretch reads ERYVVVCRPLGDFRFQHRH. Residues 149 to 172 form a helical membrane-spanning segment; sequence AVTGCAFTWVWSLLWTTPPLLGWS. The Extracellular portion of the chain corresponds to 173–196; the sequence is SYVPEGLRTSCGPNWYTGGSNNNS. Asn194 carries N-linked (GlcNAc...) asparagine glycosylation. Residues 197–224 form a helical membrane-spanning segment; it reads YILTLFVTCFVMPLSLILFSYANLLMTL. Residues 225–246 are Cytoplasmic-facing; the sequence is RAAAAQQQESDTTQQAERQVTR. Residues 247–270 form a helical membrane-spanning segment; sequence MVVAMVMAFLICWLPYTTFALVVA. Residues 271-278 are Extracellular-facing; sequence TNKDIAIQ. A helical transmembrane segment spans residues 279–303; it reads PALASLPSYFSKTATVYNPIIYVFM. An N6-(retinylidene)lysine modification is found at Lys290. At 304–349 the chain is on the cytoplasmic side; the sequence is NKQFQSCLLKMLCCGHHPRGTGRTAPAAPASPTDGLRNKVTPSHPV. S-palmitoyl cysteine attachment occurs at residues Cys316 and Cys317. The tract at residues 325 to 349 is disordered; sequence GRTAPAAPASPTDGLRNKVTPSHPV.

This sequence belongs to the G-protein coupled receptor 1 family. Opsin subfamily. In terms of processing, phosphorylated on some or all of the serine and threonine residues present in the C-terminal region. In terms of tissue distribution, pineal gland.

It is found in the membrane. Functionally, produces a slow and prolonged phototransduction response consistent with the non-visual function of pineal photoreception. The polypeptide is Pinopsin (Columba livia (Rock dove)).